A 152-amino-acid polypeptide reads, in one-letter code: MFRGATLVNLDSKGRLAVPTRYREMLNGESQGQMVCTIDLHQPCLLLYPLPEWEIIEQKLSRLSSMNPAERRVQRLLLGHASECQMDSAGRLLIANTLRQHADLKKEVMLVGQFNKFELWDEQTWYQQVRDDIDAEQSTQEPLSDRLQDLSL.

2 consecutive SpoVT-AbrB domains span residues 5 to 52 (ATLV…PLPE) and 81 to 124 (ASEC…DEQT).

This sequence belongs to the MraZ family. Forms oligomers.

Its subcellular location is the cytoplasm. The protein localises to the nucleoid. In terms of biological role, negatively regulates its own expression and that of the subsequent genes in the proximal part of the division and cell wall (dcw) gene cluster. Acts by binding directly to DNA. May also regulate the expression of genes outside the dcw cluster. The polypeptide is Transcriptional regulator MraZ (Pectobacterium carotovorum subsp. carotovorum (strain PC1)).